A 219-amino-acid chain; its full sequence is Large ribosomal subunit protein eL13 (219 aa).

Positions 198-219 are disordered; the sequence is KDAAENPDDVTKAPTAVKRNKT.

Belongs to the eukaryotic ribosomal protein eL13 family. In terms of assembly, component of the 60S large ribosomal subunit (LSU).

Its subcellular location is the cytoplasm. Its function is as follows. Component of the ribosome, a large ribonucleoprotein complex responsible for the synthesis of proteins in the cell. The small ribosomal subunit (SSU) binds messenger RNAs (mRNAs) and translates the encoded message by selecting cognate aminoacyl-transfer RNA (tRNA) molecules. The large subunit (LSU) contains the ribosomal catalytic site termed the peptidyl transferase center (PTC), which catalyzes the formation of peptide bonds, thereby polymerizing the amino acids delivered by tRNAs into a polypeptide chain. The nascent polypeptides leave the ribosome through a tunnel in the LSU and interact with protein factors that function in enzymatic processing, targeting, and the membrane insertion of nascent chains at the exit of the ribosomal tunnel. As part of the LSU, it is probably required for its formation and the maturation of rRNAs. The sequence is that of Large ribosomal subunit protein eL13 (RpL13) from Spodoptera frugiperda (Fall armyworm).